A 422-amino-acid polypeptide reads, in one-letter code: UDP-N-acetylglucosamine 1-carboxyvinyltransferase (422 aa).

Phosphoenolpyruvate is bound at residue 22–23 (KN). Residue arginine 93 coordinates UDP-N-acetyl-alpha-D-glucosamine. Cysteine 117 acts as the Proton donor in catalysis. Cysteine 117 carries the post-translational modification 2-(S-cysteinyl)pyruvic acid O-phosphothioketal. UDP-N-acetyl-alpha-D-glucosamine contacts are provided by residues 122 to 126 (RPVDL), aspartate 308, and leucine 330.

It belongs to the EPSP synthase family. MurA subfamily.

The protein localises to the cytoplasm. The enzyme catalyses phosphoenolpyruvate + UDP-N-acetyl-alpha-D-glucosamine = UDP-N-acetyl-3-O-(1-carboxyvinyl)-alpha-D-glucosamine + phosphate. It participates in cell wall biogenesis; peptidoglycan biosynthesis. Its function is as follows. Cell wall formation. Adds enolpyruvyl to UDP-N-acetylglucosamine. The chain is UDP-N-acetylglucosamine 1-carboxyvinyltransferase from Helicobacter pylori (strain P12).